The sequence spans 1025 residues: Probable outer membrane protein PmpF (1025 aa).

Residues 1–20 form the signal peptide; that stretch reads MTRRILPLSLVFIPLSCISA. A disordered region spans residues 654 to 681; that stretch reads NSTETQTANNSIQEQKNTSETFDSNSTT. The segment covering 659–681 has biased composition (polar residues); it reads QTANNSIQEQKNTSETFDSNSTT. Residues 748–1025 enclose the Autotransporter domain; sequence LLPDDSWFAL…YMNAGGALVF (278 aa).

It belongs to the PMP outer membrane protein family.

The protein resides in the secreted. It is found in the cell wall. Its subcellular location is the cell outer membrane. This Chlamydia muridarum (strain MoPn / Nigg) protein is Probable outer membrane protein PmpF (pmpF).